Here is a 760-residue protein sequence, read N- to C-terminus: Elongation factor G, mitochondrial (760 aa).

A mitochondrion-targeting transit peptide spans 1 to 37 (MIRGMLPRGLRALRPSVSPTVVSSSLHRNFHSSIRRF). The tr-type G domain maps to 68-349 (SRLRNIGVSA…AVVDYLPQPN (282 aa)). GTP is bound by residues 77–84 (AHIDSGKT), 148–152 (DTPGH), and 202–205 (NKMD).

Belongs to the TRAFAC class translation factor GTPase superfamily. Classic translation factor GTPase family. EF-G/EF-2 subfamily.

It localises to the mitochondrion. Its pathway is protein biosynthesis; polypeptide chain elongation. In terms of biological role, mitochondrial GTPase that catalyzes the GTP-dependent ribosomal translocation step during translation elongation. During this step, the ribosome changes from the pre-translocational (PRE) to the post-translocational (POST) state as the newly formed A-site-bound peptidyl-tRNA and P-site-bound deacylated tRNA move to the P and E sites, respectively. Catalyzes the coordinated movement of the two tRNA molecules, the mRNA and conformational changes in the ribosome. In Meyerozyma guilliermondii (strain ATCC 6260 / CBS 566 / DSM 6381 / JCM 1539 / NBRC 10279 / NRRL Y-324) (Yeast), this protein is Elongation factor G, mitochondrial.